The following is a 300-amino-acid chain: Sulfate adenylyltransferase subunit 2 (300 aa).

Belongs to the PAPS reductase family. CysD subfamily. As to quaternary structure, heterodimer composed of CysD, the smaller subunit, and CysN.

The catalysed reaction is sulfate + ATP + H(+) = adenosine 5'-phosphosulfate + diphosphate. It functions in the pathway sulfur metabolism; hydrogen sulfide biosynthesis; sulfite from sulfate: step 1/3. Functionally, with CysN forms the ATP sulfurylase (ATPS) that catalyzes the adenylation of sulfate producing adenosine 5'-phosphosulfate (APS) and diphosphate, the first enzymatic step in sulfur assimilation pathway. APS synthesis involves the formation of a high-energy phosphoric-sulfuric acid anhydride bond driven by GTP hydrolysis by CysN coupled to ATP hydrolysis by CysD. This chain is Sulfate adenylyltransferase subunit 2, found in Magnetococcus marinus (strain ATCC BAA-1437 / JCM 17883 / MC-1).